The sequence spans 636 residues: Plasma kallikrein (636 aa).

The first 19 residues, 1 to 19, serve as a signal peptide directing secretion; that stretch reads MIALRQAAYFICLFATVSC. 4 consecutive Apple domains span residues 21 to 104, 111 to 194, 201 to 284, and 294 to 377; these read CLTQ…LKRC, CHRS…LKAC, CRVD…LLTC, and CHSK…LRLC. Intrachain disulfides connect Cys-21–Cys-104, Cys-47–Cys-77, Cys-51–Cys-57, Cys-111–Cys-194, Cys-137–Cys-166, Cys-141–Cys-147, Cys-201–Cys-284, Cys-227–Cys-256, Cys-231–Cys-237, Cys-294–Cys-377, Cys-320–Cys-349, and Cys-324–Cys-330. N-linked (GlcNAc...) asparagine glycans are attached at residues Asn-66 and Asn-127. Asn-361 and Asn-397 each carry an N-linked (GlcNAc...) asparagine glycan. Residues 392–627 form the Peptidase S1 domain; it reads IVGGTNASWG…YVDWILEKTQ (236 aa). The cysteines at positions 420 and 436 are disulfide-linked. His-435 (charge relay system) is an active-site residue. N-linked (GlcNAc...) asparagine glycosylation is present at Asn-454. Residue Asp-484 is the Charge relay system of the active site. Asn-495 carries N-linked (GlcNAc...) asparagine glycosylation. Cystine bridges form between Cys-518/Cys-585, Cys-549/Cys-564, and Cys-575/Cys-603. The active-site Charge relay system is Ser-579.

The protein belongs to the peptidase S1 family. Plasma kallikrein subfamily. Forms a heterodimer with SERPINA5. The zymogen is activated by factor XIIa, which cleaves the molecule into a light chain, which contains the active site, and a heavy chain, which associates with HMW kininogen. These chains are linked by one or more disulfide bonds.

The protein resides in the secreted. It catalyses the reaction Cleaves selectively Arg-|-Xaa and Lys-|-Xaa bonds, including Lys-|-Arg and Arg-|-Ser bonds in (human) kininogen to release bradykinin.. Its activity is regulated as follows. Inhibited by SERPINA5. The enzyme cleaves Lys-Arg and Arg-Ser bonds. It activates, in a reciprocal reaction, factor XII after its binding to a negatively charged surface. It also releases bradykinin from HMW kininogen and may also play a role in the renin-angiotensin system by converting prorenin into renin. This chain is Plasma kallikrein (KLKB1), found in Bos taurus (Bovine).